We begin with the raw amino-acid sequence, 114 residues long: Hydrogenase maturation factor HypA (114 aa).

Ni(2+) is bound at residue His2. Cys74, Cys77, Cys90, and Cys93 together coordinate Zn(2+).

The protein belongs to the HypA/HybF family.

Involved in the maturation of [NiFe] hydrogenases. Required for nickel insertion into the metal center of the hydrogenase. This Campylobacter jejuni subsp. jejuni serotype O:2 (strain ATCC 700819 / NCTC 11168) protein is Hydrogenase maturation factor HypA.